Reading from the N-terminus, the 178-residue chain is Conodipine-P3 (178 aa).

An N-terminal signal peptide occupies residues 1-24 (MKLLAPVLWAMAALGVTWLVAVDS). P38 bears the 4-hydroxyproline mark. 2 positions are modified to 4-hydroxyproline; partial: P42 and P49. The active site involves H54. Positions 98-130 (KREVTSHRATSIAHSRLWKTALDQKSFLNRKAR) are cleaved as a propeptide — interchain peptide. Residue Q131 is modified to Pyrrolidone carboxylic acid. P137 bears the 4-hydroxyproline; partial mark.

The protein belongs to the phospholipase A2 family. Group IX subfamily. In terms of assembly, heterodimer of an alpha and a beta chain; probably disulfide-linked. Requires Ca(2+) as cofactor. Expressed by the venom duct.

The protein localises to the secreted. It catalyses the reaction a 1,2-diacyl-sn-glycero-3-phosphocholine + H2O = a 1-acyl-sn-glycero-3-phosphocholine + a fatty acid + H(+). Functionally, catalyzes the calcium-dependent hydrolysis of the 2-acyl groups in 3-sn-phosphoglycerides. The protein is Conodipine-P3 of Conus purpurascens (Purple cone).